The following is a 469-amino-acid chain: 3-isopropylmalate dehydratase large subunit (469 aa).

Positions 347, 408, and 411 each coordinate [4Fe-4S] cluster.

Belongs to the aconitase/IPM isomerase family. LeuC type 1 subfamily. As to quaternary structure, heterodimer of LeuC and LeuD. The cofactor is [4Fe-4S] cluster.

The enzyme catalyses (2R,3S)-3-isopropylmalate = (2S)-2-isopropylmalate. It functions in the pathway amino-acid biosynthesis; L-leucine biosynthesis; L-leucine from 3-methyl-2-oxobutanoate: step 2/4. Its function is as follows. Catalyzes the isomerization between 2-isopropylmalate and 3-isopropylmalate, via the formation of 2-isopropylmaleate. The sequence is that of 3-isopropylmalate dehydratase large subunit from Histophilus somni (strain 129Pt) (Haemophilus somnus).